Reading from the N-terminus, the 542-residue chain is Sialate O-acetylesterase (542 aa).

A signal peptide spans 1–23 (MVSPRPVGLMLLLIIARVSRGAG). N-linked (GlcNAc...) asparagine glycosylation is found at asparagine 107, asparagine 138, asparagine 188, asparagine 294, asparagine 357, asparagine 428, asparagine 449, and asparagine 463.

Disulfide-linked heterodimer of a small subunit and a large subunit. Post-translationally, the two subunits are derived from a single precursor by proteolytic cleavage. Glycosylated. In terms of tissue distribution, widely expressed.

It localises to the lysosome. The catalysed reaction is N-acetyl-9-O-acetylneuraminate + H2O = N-acetylneuraminate + acetate + H(+). It carries out the reaction an Ac-O-9-sialoglycoconjugate + H2O = a sialoglycoconjugate + acetate + H(+). Its activity is regulated as follows. Inhibited by diisopropyl fluorophosphate and diethyl-P-nitrophenyl phosphate. Catalyzes the removal of O-acetyl ester groups from position 9 of the free diacetylated sialate N-acetyl-9-O-acetylneuraminate (Neu5,9Ac2) in the cytosol and of the diacetylated sialate residues of sialylglycoconjugates in the lysosomes. Together with the sialate-O-acetyltransferase they regulate the balance of acetylated sialoglycoconjugates, key players in various processes such as cell-cell interactions, host-pathogen recognition, and tumor antigenicity. The chain is Sialate O-acetylesterase (Siae) from Rattus norvegicus (Rat).